The following is a 473-amino-acid chain: Trehalose-6-phosphate synthase (473 aa).

Arginine 10 serves as a coordination point for D-glucose 6-phosphate. 21–22 (GG) lines the UDP-alpha-D-glucose pocket. D-glucose 6-phosphate is bound by residues tyrosine 76 and aspartate 130. Arginine 262 and lysine 267 together coordinate UDP-alpha-D-glucose. Arginine 300 is a binding site for D-glucose 6-phosphate. UDP-alpha-D-glucose contacts are provided by residues phenylalanine 339 and 365–369 (LVAKE). The tract at residues 454 to 473 (TPRSPERQQQNNVATFPKLA) is disordered.

It belongs to the glycosyltransferase 20 family. In terms of assembly, homotetramer.

It carries out the reaction D-glucose 6-phosphate + UDP-alpha-D-glucose = alpha,alpha-trehalose 6-phosphate + UDP + H(+). The protein operates within glycan biosynthesis; trehalose biosynthesis. Probably involved in the osmoprotection via the biosynthesis of trehalose. Catalyzes the transfer of glucose from UDP-alpha-D-glucose (UDP-Glc) to D-glucose 6-phosphate (Glc-6-P) to form trehalose-6-phosphate. Acts with retention of the anomeric configuration of the UDP-sugar donor. The protein is Trehalose-6-phosphate synthase of Salmonella paratyphi A (strain ATCC 9150 / SARB42).